Reading from the N-terminus, the 580-residue chain is Phosphatase and actin regulator 1 (580 aa).

Ser67 and Ser78 each carry phosphoserine. A Phosphothreonine modification is found at Thr104. Positions 108-129 (RRRSKFANLGRIFKPWKWRKKK) match the Nuclear localization signal motif. One copy of the RPEL 1 repeat lies at 138-163 (AALERKISMRQSREELIKRGVLKEIY). Positions 331-351 (EQRVPCSTSYHSSGLHSSDGV) are disordered. Low complexity predominate over residues 337 to 348 (STSYHSSGLHSS). 3 RPEL repeats span residues 422-447 (DSLA…PRQT), 460-485 (TKLT…KPRN), and 498-523 (RRLT…IRFS). The tract at residues 462–494 (LTRRLSQRPTAEELEQRNILKPRNEQEEQEEKR) is disordered. Residue Ser467 is modified to Phosphoserine. A compositionally biased stretch (basic and acidic residues) spans 471–494 (TAEELEQRNILKPRNEQEEQEEKR). Ser505 is subject to Phosphoserine.

It belongs to the phosphatase and actin regulator family. Interacts (via RPEL repeats) with ACTA1 and PPP1CA; ACTA1 and PPP1CA compete for the same binding site. In terms of tissue distribution, selectively expressed in brain. High levels are found in the olfactory tubercle, nucleus accumbens core and shell, caudate-putamen, cerebral cortex, hippocampus and piriform cortex. Moderate to high levels in the olfactory bulb, arcuate and ventromedial hypothalamus, subthalamic nucleus, amygdala, lateral septum, habenula and thalamus. Low expression, if any, in substantia nigra pars compacta/pars reticula and globus pallidus (at protein level).

It is found in the cytoplasm. The protein localises to the synapse. The protein resides in the nucleus. Functionally, binds actin monomers (G actin) and plays a role in multiple processes including the regulation of actin cytoskeleton dynamics, actin stress fibers formation, cell motility and survival, formation of tubules by endothelial cells, and regulation of PPP1CA activity. Involved in the regulation of cortical neuron migration and dendrite arborization. The sequence is that of Phosphatase and actin regulator 1 (Phactr1) from Rattus norvegicus (Rat).